A 212-amino-acid polypeptide reads, in one-letter code: Phosphoribosylglycinamide formyltransferase (212 aa).

Gly-11–Asn-13 serves as a coordination point for N(1)-(5-phospho-beta-D-ribosyl)glycinamide. (6R)-10-formyltetrahydrofolate contacts are provided by residues Arg-64, Met-89–Leu-92, and Asn-106. His-108 serves as the catalytic Proton donor. Position 140-144 (Thr-140–Asp-144) interacts with (6R)-10-formyltetrahydrofolate. Gln-170–Glu-173 is a binding site for N(1)-(5-phospho-beta-D-ribosyl)glycinamide.

The protein belongs to the GART family. As to quaternary structure, monomer. Homodimer below pH 6.8.

It carries out the reaction N(1)-(5-phospho-beta-D-ribosyl)glycinamide + (6R)-10-formyltetrahydrofolate = N(2)-formyl-N(1)-(5-phospho-beta-D-ribosyl)glycinamide + (6S)-5,6,7,8-tetrahydrofolate + H(+). It participates in purine metabolism; IMP biosynthesis via de novo pathway; N(2)-formyl-N(1)-(5-phospho-D-ribosyl)glycinamide from N(1)-(5-phospho-D-ribosyl)glycinamide (10-formyl THF route): step 1/1. Its activity is regulated as follows. Inhibited by N10-(bromoacetyl)-5,8-dideazafolate. Its function is as follows. Catalyzes the transfer of a formyl group from 10-formyltetrahydrofolate to 5-phospho-ribosyl-glycinamide (GAR), producing 5-phospho-ribosyl-N-formylglycinamide (FGAR) and tetrahydrofolate. This is Phosphoribosylglycinamide formyltransferase from Escherichia coli (strain K12).